An 874-amino-acid chain; its full sequence is Probable cation-transporting P-type ATPase (874 aa).

At 1 to 41 the chain is on the cytoplasmic side; that stretch reads MNSWTGLSEQAAIKSRQEHGANFLPEKKATPFWLLFLQQFK. The chain crosses the membrane as a helical span at residues 42–62; the sequence is SLVVILLLLASLLSFVVAIVS. Topologically, residues 63–79 are extracellular; sequence GLRSNWNFNHDLIIEWV. The chain crosses the membrane as a helical span at residues 80–100; that stretch reads QPFIILLTVFANSLIGSIQEF. Over 101-237 the chain is Cytoplasmic; that stretch reads KAQKSASALK…TKLSPLQQKL (137 aa). The chain crosses the membrane as a helical span at residues 238–257; the sequence is EKIGKWFSWFGLGLFAVVFL. Residues 258-275 are Extracellular-facing; the sequence is VQTALLGFDNFTNNWSIA. A helical membrane pass occupies residues 276–293; it reads LIGAIALVVAIIPEGLVT. The Cytoplasmic segment spans residues 294-644; the sequence is FINVIFALSV…EEGRKTFLTC (351 aa). D331 serves as the catalytic 4-aspartylphosphate intermediate. The Mg(2+) site is built by D589 and D593. The helical transmembrane segment at 645-664 threads the bilayer; that stretch reads KRVLLNLFLTSIAGTVVVLL. Residues 665–687 lie on the Extracellular side of the membrane; sequence GLFILGQVFKTNLLQQGHDFQVF. Residues 688-708 traverse the membrane as a helical segment; sequence SPTQLLIINLFVHGFPAVALA. At 709 to 726 the chain is on the cytoplasmic side; the sequence is VQPVKEKLMVGSFSTKNL. Residues 727 to 749 traverse the membrane as a helical segment; the sequence is FYNRQGFDLIWQSLFLSFLTLLF. Residues 750–770 lie on the Extracellular side of the membrane; sequence YSLGIIYAINNRDLQTSGDLI. The chain crosses the membrane as a helical span at residues 771-790; that stretch reads NRAGSTCGFFILGASAALNS. Residues 791-803 are Cytoplasmic-facing; that stretch reads LNLMVDKPLLMTN. Residues 804 to 826 form a helical membrane-spanning segment; it reads PWFFKLVWIGSLASILVFLLIIF. The Extracellular segment spans residues 827 to 844; that stretch reads INPLGLVFNVLQDLTNHP. Residues 845–865 traverse the membrane as a helical segment; sequence VLISYSFGGVILYMGMNEVVK. Residues 866–874 lie on the Cytoplasmic side of the membrane; the sequence is LIRLGYGNI.

This sequence belongs to the cation transport ATPase (P-type) (TC 3.A.3) family. Type II subfamily.

The protein resides in the cell membrane. The catalysed reaction is ATP + H2O = ADP + phosphate + H(+). In terms of biological role, could mediate calcium influx. This chain is Probable cation-transporting P-type ATPase (pacL), found in Mycoplasma genitalium (strain ATCC 33530 / DSM 19775 / NCTC 10195 / G37) (Mycoplasmoides genitalium).